The primary structure comprises 394 residues: Elongation factor Tu 1 (394 aa).

Residues 10–204 (KPHVNVGTIG…ALDSYIPEPE (195 aa)) enclose the tr-type G domain. The G1 stretch occupies residues 19 to 26 (GHVDHGKT). A GTP-binding site is contributed by 19–26 (GHVDHGKT). T26 is a Mg(2+) binding site. The interval 60-64 (GITIS) is G2. A G3 region spans residues 81-84 (DCPG). GTP-binding positions include 81–85 (DCPGH) and 136–139 (NKCD). Positions 136–139 (NKCD) are G4. The G5 stretch occupies residues 174–176 (SAL).

The protein belongs to the TRAFAC class translation factor GTPase superfamily. Classic translation factor GTPase family. EF-Tu/EF-1A subfamily. As to quaternary structure, monomer.

It localises to the cytoplasm. It catalyses the reaction GTP + H2O = GDP + phosphate + H(+). Functionally, GTP hydrolase that promotes the GTP-dependent binding of aminoacyl-tRNA to the A-site of ribosomes during protein biosynthesis. The protein is Elongation factor Tu 1 of Photorhabdus laumondii subsp. laumondii (strain DSM 15139 / CIP 105565 / TT01) (Photorhabdus luminescens subsp. laumondii).